Here is a 399-residue protein sequence, read N- to C-terminus: Acetylornithine aminotransferase (399 aa).

Pyridoxal 5'-phosphate contacts are provided by residues 102–103 (GA) and phenylalanine 138. Arginine 141 provides a ligand contact to N(2)-acetyl-L-ornithine. A pyridoxal 5'-phosphate-binding site is contributed by 223-226 (DEVQ). The residue at position 252 (lysine 252) is an N6-(pyridoxal phosphate)lysine. Threonine 280 is a pyridoxal 5'-phosphate binding site.

This sequence belongs to the class-III pyridoxal-phosphate-dependent aminotransferase family. ArgD subfamily. Homodimer. Requires pyridoxal 5'-phosphate as cofactor.

Its subcellular location is the cytoplasm. The catalysed reaction is N(2)-acetyl-L-ornithine + 2-oxoglutarate = N-acetyl-L-glutamate 5-semialdehyde + L-glutamate. The protein operates within amino-acid biosynthesis; L-arginine biosynthesis; N(2)-acetyl-L-ornithine from L-glutamate: step 4/4. The sequence is that of Acetylornithine aminotransferase from Ralstonia nicotianae (strain ATCC BAA-1114 / GMI1000) (Ralstonia solanacearum).